The sequence spans 166 residues: Protein UL5 (166 aa).

It belongs to the RL11 family. In terms of assembly, interacts with host IQGAP1.

It localises to the host cytoplasm. May play a role in rearrangement of cellular cytoskeleton towards an efficient viral assembly and spreading. The protein is Protein UL5 (UL5) of Human cytomegalovirus (strain AD169) (HHV-5).